Reading from the N-terminus, the 193-residue chain is Holliday junction branch migration complex subunit RuvA (193 aa).

A domain I region spans residues 1-64 (MIGRIAGILL…EDAHLLYGFL (64 aa)). Residues 65-139 (TQQERTTFRE…GKLGADLGAL (75 aa)) are domain II. Residues 139–143 (LAGAA) are flexible linker. The interval 144-193 (SPSDHATDILNALLALGYSEKEGLAAIKNVPAGTGVSEGIKLALKALSKA) is domain III.

Belongs to the RuvA family. As to quaternary structure, homotetramer. Forms an RuvA(8)-RuvB(12)-Holliday junction (HJ) complex. HJ DNA is sandwiched between 2 RuvA tetramers; dsDNA enters through RuvA and exits via RuvB. An RuvB hexamer assembles on each DNA strand where it exits the tetramer. Each RuvB hexamer is contacted by two RuvA subunits (via domain III) on 2 adjacent RuvB subunits; this complex drives branch migration. In the full resolvosome a probable DNA-RuvA(4)-RuvB(12)-RuvC(2) complex forms which resolves the HJ.

The protein localises to the cytoplasm. Its function is as follows. The RuvA-RuvB-RuvC complex processes Holliday junction (HJ) DNA during genetic recombination and DNA repair, while the RuvA-RuvB complex plays an important role in the rescue of blocked DNA replication forks via replication fork reversal (RFR). RuvA specifically binds to HJ cruciform DNA, conferring on it an open structure. The RuvB hexamer acts as an ATP-dependent pump, pulling dsDNA into and through the RuvAB complex. HJ branch migration allows RuvC to scan DNA until it finds its consensus sequence, where it cleaves and resolves the cruciform DNA. In Burkholderia cenocepacia (strain ATCC BAA-245 / DSM 16553 / LMG 16656 / NCTC 13227 / J2315 / CF5610) (Burkholderia cepacia (strain J2315)), this protein is Holliday junction branch migration complex subunit RuvA.